The primary structure comprises 833 residues: Ribosome biogenesis protein BOP1 homolog (833 aa).

The segment at 20 to 202 is disordered; it reads NKKSEPIAVS…DSDDSSEDES (183 aa). Positions 36–56 are enriched in low complexity; the sequence is SKPTTTATTTVSKSPVSTITT. 2 stretches are compositionally biased toward acidic residues: residues 90 to 111 and 136 to 150; these read SEDDEDYESEEDDEGDDEEDVE and EAEESLVEYQSEDDS. Low complexity predominate over residues 154–170; sequence SSKSSSSTTTTTTTTKK. A compositionally biased stretch (polar residues) spans 182–192; the sequence is KQWTNDPNQFY. The segment covering 193-202 has biased composition (acidic residues); the sequence is DSDDSSEDES. 3 WD repeats span residues 331–370, 488–527, and 529–569; these read TKAIRMGWIKLNKKGKKGEKDKKDGNFDLWADEGEEKEKT, GHKARVRSISISPNGQWLASGSDDCTIKIWEVSSTRCLYS, and EVES…TQTE. The segment at 568-592 is disordered; the sequence is TEHSPETEKILTKPPTDSSTEQQQN. Residues 582 to 592 are compositionally biased toward polar residues; the sequence is PTDSSTEQQQN. 5 WD repeats span residues 618–660, 663–701, 704–743, 747–786, and 802–833; these read HHPF…TQSP, KSKTPNQVTRFHPNKPIFFVADQNIIRVYDLMKQELIKK, TGCRYISSIDIHPQGDNVIMGGYDKKVCWFDLDLSVRPYK, YHKMAVRKVIYHPTLPLFASCSDDLSIHVFHGMVYDDLLQ, and INDLGVLDIVFHPKQPWIFSSGADSTIRLYTN.

It belongs to the WD repeat BOP1/ERB1 family.

It is found in the nucleus. It localises to the nucleolus. The protein localises to the nucleoplasm. Required for maturation of ribosomal RNAs and formation of the large ribosomal subunit. The polypeptide is Ribosome biogenesis protein BOP1 homolog (Dictyostelium discoideum (Social amoeba)).